Reading from the N-terminus, the 249-residue chain is tRNA pseudouridine synthase A (249 aa).

The active-site Nucleophile is aspartate 52. Tyrosine 110 is a binding site for substrate.

The protein belongs to the tRNA pseudouridine synthase TruA family. Homodimer.

It carries out the reaction uridine(38/39/40) in tRNA = pseudouridine(38/39/40) in tRNA. In terms of biological role, formation of pseudouridine at positions 38, 39 and 40 in the anticodon stem and loop of transfer RNAs. The polypeptide is tRNA pseudouridine synthase A (Exiguobacterium sibiricum (strain DSM 17290 / CCUG 55495 / CIP 109462 / JCM 13490 / 255-15)).